The chain runs to 604 residues: Threonine--tRNA ligase (604 aa).

A catalytic region spans residues 210-501; sequence DHRKIGTEME…LTEHYAGEFP (292 aa). C302, H353, and H478 together coordinate Zn(2+).

This sequence belongs to the class-II aminoacyl-tRNA synthetase family. Homodimer. The cofactor is Zn(2+).

It is found in the cytoplasm. It carries out the reaction tRNA(Thr) + L-threonine + ATP = L-threonyl-tRNA(Thr) + AMP + diphosphate + H(+). In terms of biological role, catalyzes the attachment of threonine to tRNA(Thr) in a two-step reaction: L-threonine is first activated by ATP to form Thr-AMP and then transferred to the acceptor end of tRNA(Thr). Also edits incorrectly charged L-seryl-tRNA(Thr). This Sulfurovum sp. (strain NBC37-1) protein is Threonine--tRNA ligase.